Consider the following 227-residue polypeptide: Cytochrome c oxidase subunit 2 (227 aa).

The Mitochondrial intermembrane segment spans residues 1–14 (MAYPFQLGLQDATS). A helical transmembrane segment spans residues 15 to 45 (PIMEELLHFHDHTLMIVFLISSLVLYIISLM). Residues 46–59 (LTTKLTHTSTMDAQ) are Mitochondrial matrix-facing. The helical transmembrane segment at 60–87 (EVETVWTILPAIILILIALPSLRILYMM) threads the bilayer. The Mitochondrial intermembrane portion of the chain corresponds to 88 to 227 (DEINNPSLTV…YFETWSAVMV (140 aa)). Residues H161, C196, E198, C200, H204, and M207 each contribute to the Cu cation site. E198 lines the Mg(2+) pocket. Y218 is subject to Phosphotyrosine.

It belongs to the cytochrome c oxidase subunit 2 family. In terms of assembly, component of the cytochrome c oxidase (complex IV, CIV), a multisubunit enzyme composed of 14 subunits. The complex is composed of a catalytic core of 3 subunits MT-CO1, MT-CO2 and MT-CO3, encoded in the mitochondrial DNA, and 11 supernumerary subunits COX4I, COX5A, COX5B, COX6A, COX6B, COX6C, COX7A, COX7B, COX7C, COX8 and NDUFA4, which are encoded in the nuclear genome. The complex exists as a monomer or a dimer and forms supercomplexes (SCs) in the inner mitochondrial membrane with NADH-ubiquinone oxidoreductase (complex I, CI) and ubiquinol-cytochrome c oxidoreductase (cytochrome b-c1 complex, complex III, CIII), resulting in different assemblies (supercomplex SCI(1)III(2)IV(1) and megacomplex MCI(2)III(2)IV(2)). Found in a complex with TMEM177, COA6, COX18, COX20, SCO1 and SCO2. Interacts with TMEM177 in a COX20-dependent manner. Interacts with COX20. Interacts with COX16. Cu cation serves as cofactor.

The protein localises to the mitochondrion inner membrane. It carries out the reaction 4 Fe(II)-[cytochrome c] + O2 + 8 H(+)(in) = 4 Fe(III)-[cytochrome c] + 2 H2O + 4 H(+)(out). Component of the cytochrome c oxidase, the last enzyme in the mitochondrial electron transport chain which drives oxidative phosphorylation. The respiratory chain contains 3 multisubunit complexes succinate dehydrogenase (complex II, CII), ubiquinol-cytochrome c oxidoreductase (cytochrome b-c1 complex, complex III, CIII) and cytochrome c oxidase (complex IV, CIV), that cooperate to transfer electrons derived from NADH and succinate to molecular oxygen, creating an electrochemical gradient over the inner membrane that drives transmembrane transport and the ATP synthase. Cytochrome c oxidase is the component of the respiratory chain that catalyzes the reduction of oxygen to water. Electrons originating from reduced cytochrome c in the intermembrane space (IMS) are transferred via the dinuclear copper A center (CU(A)) of subunit 2 and heme A of subunit 1 to the active site in subunit 1, a binuclear center (BNC) formed by heme A3 and copper B (CU(B)). The BNC reduces molecular oxygen to 2 water molecules using 4 electrons from cytochrome c in the IMS and 4 protons from the mitochondrial matrix. This Lycalopex culpaeus (Culpeo fox) protein is Cytochrome c oxidase subunit 2 (MT-CO2).